The sequence spans 212 residues: Orotate phosphoribosyltransferase (212 aa).

Residues Arg94, Lys98, His100, and 120–128 each bind 5-phospho-alpha-D-ribose 1-diphosphate; that span reads EDLISTGGS. Ser124 is a binding site for orotate.

Belongs to the purine/pyrimidine phosphoribosyltransferase family. PyrE subfamily. In terms of assembly, homodimer. The cofactor is Mg(2+).

The catalysed reaction is orotidine 5'-phosphate + diphosphate = orotate + 5-phospho-alpha-D-ribose 1-diphosphate. It participates in pyrimidine metabolism; UMP biosynthesis via de novo pathway; UMP from orotate: step 1/2. In terms of biological role, catalyzes the transfer of a ribosyl phosphate group from 5-phosphoribose 1-diphosphate to orotate, leading to the formation of orotidine monophosphate (OMP). In Bacillus pumilus (strain SAFR-032), this protein is Orotate phosphoribosyltransferase.